A 144-amino-acid chain; its full sequence is Maximins 10/H3 (144 aa).

The first 18 residues, M1 to A18, serve as a signal peptide directing secretion. Residues R19–R43 constitute a propeptide that is removed on maturation. S70 carries the serine amide modification. A propeptide spanning residues T74 to R123 is cleaved from the precursor. I143 is modified (isoleucine amide).

The protein belongs to the bombinin family. As to expression, expressed by the skin glands.

Its subcellular location is the secreted. In terms of biological role, maximin-10 shows antimicrobial activity against bacteria and against the fungus C.albicans. It has little hemolytic activity. Functionally, maximin-H3 shows antibacterial activity against both Gram-positive and Gram-negative bacteria. It also shows antimicrobial activity against the fungus C.albicans. Shows strong hemolytic activity. The chain is Maximins 10/H3 from Bombina maxima (Giant fire-bellied toad).